The primary structure comprises 352 residues: MKKIVFTGGGSAGHVTPNLAIIPYLKEDNWDISYIGSHQGIEKTIIEKEDIPYYSIASGKLRRYFDLKNIKDPFLVMKGVMDAYVRIRKLKPDVIFSKGGFVSVPVVIGGWLNRVPVLLHESDMTPGLANKIALRFASKIFVTFEEAAKHLPKEKVIYTGSPVREEVLKGNREKALAFLGFSRKKPVITIMGGSLGAKKINETVREALPELLRKYQIVHLCGKGNLDDSLQNKEGYRQFEYVHGELPDILAITDFVISRAGSNAIFEFLTLQKPMLLIPLSKFASRGDQILNAESFERQGYASVLYEEDVTVNSLIKHVEELSHNNEAYKTALKKYNGKEAIQTIIHHISEA.

Residues 11-13 (SAG), arginine 164, serine 194, and glutamine 289 each bind UDP-N-acetyl-alpha-D-glucosamine.

The protein belongs to the glycosyltransferase 28 family. MurG subfamily.

Its subcellular location is the cell membrane. The enzyme catalyses di-trans,octa-cis-undecaprenyl diphospho-N-acetyl-alpha-D-muramoyl-L-alanyl-D-glutamyl-meso-2,6-diaminopimeloyl-D-alanyl-D-alanine + UDP-N-acetyl-alpha-D-glucosamine = di-trans,octa-cis-undecaprenyl diphospho-[N-acetyl-alpha-D-glucosaminyl-(1-&gt;4)]-N-acetyl-alpha-D-muramoyl-L-alanyl-D-glutamyl-meso-2,6-diaminopimeloyl-D-alanyl-D-alanine + UDP + H(+). Its pathway is cell wall biogenesis; peptidoglycan biosynthesis. In terms of biological role, cell wall formation. Catalyzes the transfer of a GlcNAc subunit on undecaprenyl-pyrophosphoryl-MurNAc-pentapeptide (lipid intermediate I) to form undecaprenyl-pyrophosphoryl-MurNAc-(pentapeptide)GlcNAc (lipid intermediate II). This is UDP-N-acetylglucosamine--N-acetylmuramyl-(pentapeptide) pyrophosphoryl-undecaprenol N-acetylglucosamine transferase 2 from Bacillus thuringiensis subsp. konkukian (strain 97-27).